We begin with the raw amino-acid sequence, 200 residues long: Imidazoleglycerol-phosphate dehydratase (200 aa).

This sequence belongs to the imidazoleglycerol-phosphate dehydratase family.

It is found in the cytoplasm. It carries out the reaction D-erythro-1-(imidazol-4-yl)glycerol 3-phosphate = 3-(imidazol-4-yl)-2-oxopropyl phosphate + H2O. The protein operates within amino-acid biosynthesis; L-histidine biosynthesis; L-histidine from 5-phospho-alpha-D-ribose 1-diphosphate: step 6/9. The protein is Imidazoleglycerol-phosphate dehydratase of Chlorobium phaeobacteroides (strain BS1).